A 545-amino-acid chain; its full sequence is Chaperonin GroEL 2 (545 aa).

ATP-binding positions include 29 to 32 (TLGP), 86 to 90 (DGTTT), Gly-413, 477 to 479 (DAA), and Asp-493. A disordered region spans residues 526–545 (PEPAAAGHGHGHGHQHGPGF). Basic residues predominate over residues 534–545 (GHGHGHQHGPGF).

The protein belongs to the chaperonin (HSP60) family. Forms a cylinder of 14 subunits composed of two heptameric rings stacked back-to-back. Interacts with the co-chaperonin GroES.

Its subcellular location is the cytoplasm. It carries out the reaction ATP + H2O + a folded polypeptide = ADP + phosphate + an unfolded polypeptide.. Functionally, together with its co-chaperonin GroES, plays an essential role in assisting protein folding. The GroEL-GroES system forms a nano-cage that allows encapsulation of the non-native substrate proteins and provides a physical environment optimized to promote and accelerate protein folding. This is Chaperonin GroEL 2 from Salinispora arenicola (strain CNS-205).